Here is a 554-residue protein sequence, read N- to C-terminus: Potassium-transporting ATPase potassium-binding subunit (554 aa).

10 consecutive transmembrane segments (helical) span residues 1–21 (MSPV…LALA), 60–80 (PAYL…LYVL), 131–151 (GLAV…VALV), 174–194 (VRVL…CGAI), 246–266 (PGPF…FALT), 279–299 (GYAI…LMMW), 375–395 (GLYG…LMVG), 412–432 (FAAC…AAAM), 481–501 (IGIV…ALAG), and 525–545 (GLLV…ALAL).

This sequence belongs to the KdpA family. As to quaternary structure, the system is composed of three essential subunits: KdpA, KdpB and KdpC.

It localises to the cell membrane. Part of the high-affinity ATP-driven potassium transport (or Kdp) system, which catalyzes the hydrolysis of ATP coupled with the electrogenic transport of potassium into the cytoplasm. This subunit binds the extracellular potassium ions and delivers the ions to the membrane domain of KdpB through an intramembrane tunnel. The chain is Potassium-transporting ATPase potassium-binding subunit from Streptomyces avermitilis (strain ATCC 31267 / DSM 46492 / JCM 5070 / NBRC 14893 / NCIMB 12804 / NRRL 8165 / MA-4680).